We begin with the raw amino-acid sequence, 261 residues long: uncharacterized protein (261 aa).

A coiled-coil region spans residues 16-147 (KQTSLVLQNL…QTNVNVLRSQ (132 aa)).

Its subcellular location is the cytoplasm. This is an uncharacterized protein from Schizosaccharomyces pombe (strain 972 / ATCC 24843) (Fission yeast).